Here is a 186-residue protein sequence, read N- to C-terminus: Peptidoglycan-recognition protein SD (186 aa).

Positions 1-18 are cleaved as a signal peptide; the sequence is MTWIGLLIVGLTAIAVQG. The 123-residue stretch at 47 to 169 folds into the N-acetylmuramoyl-L-alanine amidase domain; the sequence is AVIAHTAGGA…RQVSATMSPG (123 aa). A disulfide bond links Cys57 and Cys63. A glycan (N-linked (GlcNAc...) asparagine) is linked at Asn181.

It belongs to the N-acetylmuramoyl-L-alanine amidase 2 family.

Its subcellular location is the secreted. Its function is as follows. Peptidoglycan-recognition protein that plays a key role in innate immunity by binding to peptidoglycans (PGN) of Gram-positive bacteria and activating the Toll pathway. Has no activity against on Gram-negative bacteria and fungi. Shows some partial redundancy with PRPGP-SA in Gram-positive bacteria recognition. May act by activating the proteolytic cleavage of Spatzle and the subsequent activation of Toll pathway. Recognizes S.aureus PGN. The sequence is that of Peptidoglycan-recognition protein SD (PGRP-SD) from Drosophila simulans (Fruit fly).